The chain runs to 673 residues: MEGVKFPFGGIINDFNGRRKCYKQDWLAAFNSGVRILAPTLYIFIASALPVIAFGEQLSRETDRSLGIAESLASTALCGIIHSVFGGQPLLIVGVAEPTIIMYTYLHSFSKSRPELGQKLYLAWAGWVCVWTAVLLMLLAMLNACNIISRFTRIAGELFGMLITVLFIQEAVKGLIGEFLVPKSDDPSLEVYQFQWRYTNGLLAVIFSFGLLYTALKSRRARSWKYGFRWMRGFIGDYGTLLMLVLWSAFSYTVPRNLPEGVPRRLELPLPWASESLYHWTVVKDMAKVPPLYILAAFIPAIMIAGLYFFDHCVSAQMAQQKEFNLKNPTAYHYDIFILGIMTLICGLLGLPPSNGVIPQSPMHTKSLAVLKKQQMRKKMVQKAKECMREKASNSEIYGRMQDVFIEMETSPKATSVVKELENLKEAVMKADDGGGETKGKKFDPEVHIEDHLPVRVNEQRVSNLLQSVLVGLLILAVPVLRMIPTSVLWGYFTYMAVDSLPGNQFWERLQLLFITPGRRFKVLEGLHASFVEIVPYKSIVMFTLFQLLYFLICYGVTWIPVGGILFPLPFFILIALRQYILQRLFDPSHLQVLDSSEYEEMVGAPQRNSSFGFNGELREAHNIPLSVVENSEDEFYDAEILDEITTSRGELKHRTLSVKEDRSQMVKIYNHS.

The Cytoplasmic portion of the chain corresponds to 1-35; the sequence is MEGVKFPFGGIINDFNGRRKCYKQDWLAAFNSGVR. A helical membrane pass occupies residues 36–56; it reads ILAPTLYIFIASALPVIAFGE. The Extracellular portion of the chain corresponds to 57 to 75; the sequence is QLSRETDRSLGIAESLAST. Residues 76–96 traverse the membrane as a helical segment; the sequence is ALCGIIHSVFGGQPLLIVGVA. Residues 97–121 lie on the Cytoplasmic side of the membrane; the sequence is EPTIIMYTYLHSFSKSRPELGQKLY. The chain crosses the membrane as a helical span at residues 122-142; it reads LAWAGWVCVWTAVLLMLLAML. Topologically, residues 143 to 160 are extracellular; the sequence is NACNIISRFTRIAGELFG. A helical membrane pass occupies residues 161–181; that stretch reads MLITVLFIQEAVKGLIGEFLV. The Cytoplasmic segment spans residues 182–197; it reads PKSDDPSLEVYQFQWR. Residues 198 to 218 traverse the membrane as a helical segment; sequence YTNGLLAVIFSFGLLYTALKS. The Extracellular segment spans residues 219–233; the sequence is RRARSWKYGFRWMRG. Residues 234–254 traverse the membrane as a helical segment; sequence FIGDYGTLLMLVLWSAFSYTV. Over 255 to 289 the chain is Cytoplasmic; the sequence is PRNLPEGVPRRLELPLPWASESLYHWTVVKDMAKV. The helical transmembrane segment at 290–310 threads the bilayer; that stretch reads PPLYILAAFIPAIMIAGLYFF. Over 311–330 the chain is Extracellular; that stretch reads DHCVSAQMAQQKEFNLKNPT. The chain crosses the membrane as a helical span at residues 331-351; it reads AYHYDIFILGIMTLICGLLGL. Residues 352 to 468 lie on the Cytoplasmic side of the membrane; sequence PPSNGVIPQS…EQRVSNLLQS (117 aa). The helical transmembrane segment at 469-489 threads the bilayer; it reads VLVGLLILAVPVLRMIPTSVL. The Extracellular segment spans residues 490–556; the sequence is WGYFTYMAVD…QLLYFLICYG (67 aa). Residues 557 to 577 traverse the membrane as a helical segment; the sequence is VTWIPVGGILFPLPFFILIAL. Over 578–673 the chain is Cytoplasmic; the sequence is RQYILQRLFD…SQMVKIYNHS (96 aa).

It belongs to the anion exchanger (TC 2.A.31.3) family.

The protein localises to the membrane. In terms of biological role, putative boron transporter. Boron is essential for maintaining the integrity of plants cell walls. This is Probable boron transporter 7 (BOR7) from Arabidopsis thaliana (Mouse-ear cress).